We begin with the raw amino-acid sequence, 451 residues long: ATP-dependent protease ATPase subunit HslU (451 aa).

Residues I26, 68–73, D263, E328, and R400 each bind ATP; that span reads GVGKTE.

The protein belongs to the ClpX chaperone family. HslU subfamily. In terms of assembly, a double ring-shaped homohexamer of HslV is capped on each side by a ring-shaped HslU homohexamer. The assembly of the HslU/HslV complex is dependent on binding of ATP.

The protein localises to the cytoplasm. Its function is as follows. ATPase subunit of a proteasome-like degradation complex; this subunit has chaperone activity. The binding of ATP and its subsequent hydrolysis by HslU are essential for unfolding of protein substrates subsequently hydrolyzed by HslV. HslU recognizes the N-terminal part of its protein substrates and unfolds these before they are guided to HslV for hydrolysis. The sequence is that of ATP-dependent protease ATPase subunit HslU from Dichelobacter nodosus (strain VCS1703A).